The chain runs to 361 residues: tRNA/tmRNA (uracil-C(5))-methyltransferase (361 aa).

Q183, Y211, N216, E232, and D294 together coordinate S-adenosyl-L-methionine. C319 functions as the Nucleophile in the catalytic mechanism. The active-site Proton acceptor is the E353.

It belongs to the class I-like SAM-binding methyltransferase superfamily. RNA M5U methyltransferase family. TrmA subfamily.

The catalysed reaction is uridine(54) in tRNA + S-adenosyl-L-methionine = 5-methyluridine(54) in tRNA + S-adenosyl-L-homocysteine + H(+). It carries out the reaction uridine(341) in tmRNA + S-adenosyl-L-methionine = 5-methyluridine(341) in tmRNA + S-adenosyl-L-homocysteine + H(+). Its function is as follows. Dual-specificity methyltransferase that catalyzes the formation of 5-methyluridine at position 54 (m5U54) in all tRNAs, and that of position 341 (m5U341) in tmRNA (transfer-mRNA). This chain is tRNA/tmRNA (uracil-C(5))-methyltransferase, found in Acinetobacter baumannii (strain AB307-0294).